Reading from the N-terminus, the 635-residue chain is Threonine--tRNA ligase (635 aa).

Positions 1–61 constitute a TGS domain; the sequence is MTVVRLPDGT…EIDSDLVLIT (61 aa). Residues 242-533 are catalytic; the sequence is DHRKLGKQLD…LIEHHAGALP (292 aa). Residues cysteine 333, histidine 384, and histidine 510 each contribute to the Zn(2+) site.

Belongs to the class-II aminoacyl-tRNA synthetase family. Homodimer. Zn(2+) is required as a cofactor.

It is found in the cytoplasm. The catalysed reaction is tRNA(Thr) + L-threonine + ATP = L-threonyl-tRNA(Thr) + AMP + diphosphate + H(+). Its function is as follows. Catalyzes the attachment of threonine to tRNA(Thr) in a two-step reaction: L-threonine is first activated by ATP to form Thr-AMP and then transferred to the acceptor end of tRNA(Thr). Also edits incorrectly charged L-seryl-tRNA(Thr). This is Threonine--tRNA ligase from Nitrosomonas eutropha (strain DSM 101675 / C91 / Nm57).